The chain runs to 600 residues: NADH-ubiquinone oxidoreductase chain 5 (600 aa).

The next 16 helical transmembrane spans lie at 1 to 21, 27 to 47, 81 to 101, 110 to 130, 136 to 156, 178 to 198, 200 to 220, 241 to 261, 274 to 294, 301 to 323, 327 to 347, 366 to 386, 404 to 424, 450 to 470, 488 to 508, and 520 to 540; these read MYILVLTVPLLGALVSGLFGR, GAGIFTSGCLIISLSWSLLIF, LTAVMLIVVTSISTLVHIFST, VPRFMSYLSLFTFFMILLVTS, LFIGWEGVGLCSYLLINFWLT, FVLAMLAIWDQFGCLDFASVF, IVALAPSDNTTLICLFLFIGA, TPVSALIHAATMVTAGVFLLI, LMVVTIVGSLTAFMAATIGLV, VIAYSTCSQLGYMVMACGLSQYS, FHLMNHAFFKALLFLSAGSVI, IPFTYTMIVIGSLSLMGFPYL, YLAFAHWLGVFSALLTAAYSL, WNLTLPLILLALGSIFVGYLT, SIKLMPVIFSLFGAGTAVVLY, and SPVGLAGYTFLYSAWQFNYII.

Belongs to the complex I subunit 5 family.

Its subcellular location is the mitochondrion inner membrane. The catalysed reaction is a ubiquinone + NADH + 5 H(+)(in) = a ubiquinol + NAD(+) + 4 H(+)(out). In terms of biological role, core subunit of the mitochondrial membrane respiratory chain NADH dehydrogenase (Complex I) that is believed to belong to the minimal assembly required for catalysis. Complex I functions in the transfer of electrons from NADH to the respiratory chain. The immediate electron acceptor for the enzyme is believed to be ubiquinone. The protein is NADH-ubiquinone oxidoreductase chain 5 (ND5) of Metridium senile (Brown sea anemone).